Reading from the N-terminus, the 211-residue chain is FMN-dependent NADH:quinone oxidoreductase 3 (211 aa).

An FMN-binding site is contributed by 17–19 (SFS).

This sequence belongs to the azoreductase type 1 family. Homodimer. FMN serves as cofactor.

The catalysed reaction is 2 a quinone + NADH + H(+) = 2 a 1,4-benzosemiquinone + NAD(+). It catalyses the reaction N,N-dimethyl-1,4-phenylenediamine + anthranilate + 2 NAD(+) = 2-(4-dimethylaminophenyl)diazenylbenzoate + 2 NADH + 2 H(+). Quinone reductase that provides resistance to thiol-specific stress caused by electrophilic quinones. In terms of biological role, also exhibits azoreductase activity. Catalyzes the reductive cleavage of the azo bond in aromatic azo compounds to the corresponding amines. This Halalkalibacterium halodurans (strain ATCC BAA-125 / DSM 18197 / FERM 7344 / JCM 9153 / C-125) (Bacillus halodurans) protein is FMN-dependent NADH:quinone oxidoreductase 3.